Here is a 118-residue protein sequence, read N- to C-terminus: Hydrogenase maturation factor HypA (118 aa).

His-2 is a Ni(2+) binding site. Residues Cys-73, Cys-76, Cys-89, and Cys-92 each contribute to the Zn(2+) site.

Belongs to the HypA/HybF family.

Functionally, involved in the maturation of [NiFe] hydrogenases. Required for nickel insertion into the metal center of the hydrogenase. The sequence is that of Hydrogenase maturation factor HypA from Shewanella sp. (strain MR-7).